A 58-amino-acid polypeptide reads, in one-letter code: Large ribosomal subunit protein bL32c (58 aa).

Residues 1 to 23 form a disordered region; the sequence is MAVPKKRTSKAKKNARKSVWKKK.

The protein belongs to the bacterial ribosomal protein bL32 family.

The protein resides in the plastid. Its subcellular location is the chloroplast. In Trieres chinensis (Marine centric diatom), this protein is Large ribosomal subunit protein bL32c (rpl32-A).